We begin with the raw amino-acid sequence, 64 residues long: Conotoxin Cal6.26 (64 aa).

A signal peptide spans 1 to 22 (MKLTCVMIVAVLVLTVCKVVTS). Disulfide bonds link cysteine 32/cysteine 50, cysteine 40/cysteine 54, and cysteine 49/cysteine 60.

In terms of tissue distribution, expressed by the venom duct.

It is found in the secreted. Its function is as follows. Probable neurotoxin. In Californiconus californicus (California cone), this protein is Conotoxin Cal6.26.